Consider the following 488-residue polypeptide: N-succinylglutamate 5-semialdehyde dehydrogenase (488 aa).

221-226 (GSSRTG) lines the NAD(+) pocket. Residues glutamate 244 and cysteine 278 contribute to the active site.

The protein belongs to the aldehyde dehydrogenase family. AstD subfamily.

The enzyme catalyses N-succinyl-L-glutamate 5-semialdehyde + NAD(+) + H2O = N-succinyl-L-glutamate + NADH + 2 H(+). It participates in amino-acid degradation; L-arginine degradation via AST pathway; L-glutamate and succinate from L-arginine: step 4/5. In terms of biological role, catalyzes the NAD-dependent reduction of succinylglutamate semialdehyde into succinylglutamate. This is N-succinylglutamate 5-semialdehyde dehydrogenase from Pseudomonas syringae pv. syringae (strain B728a).